The following is a 464-amino-acid chain: tRNA modification GTPase MnmE (464 aa).

Arg-25, Glu-87, and Lys-130 together coordinate (6S)-5-formyl-5,6,7,8-tetrahydrofolate. Residues 226–386 form the TrmE-type G domain; that stretch reads GLSVVLAGQP…LRAELLRIAG (161 aa). Asn-236 contributes to the K(+) binding site. Residues 236–241, 255–261, and 280–283 each bind GTP; these read NVGKSS, TPIAGTT, and DTAG. Mg(2+) is bound at residue Ser-240. Thr-255, Ile-257, and Thr-260 together coordinate K(+). Thr-261 is a binding site for Mg(2+). Lys-464 provides a ligand contact to (6S)-5-formyl-5,6,7,8-tetrahydrofolate.

It belongs to the TRAFAC class TrmE-Era-EngA-EngB-Septin-like GTPase superfamily. TrmE GTPase family. As to quaternary structure, homodimer. Heterotetramer of two MnmE and two MnmG subunits. K(+) serves as cofactor.

It is found in the cytoplasm. In terms of biological role, exhibits a very high intrinsic GTPase hydrolysis rate. Involved in the addition of a carboxymethylaminomethyl (cmnm) group at the wobble position (U34) of certain tRNAs, forming tRNA-cmnm(5)s(2)U34. The chain is tRNA modification GTPase MnmE from Burkholderia ambifaria (strain ATCC BAA-244 / DSM 16087 / CCUG 44356 / LMG 19182 / AMMD) (Burkholderia cepacia (strain AMMD)).